The chain runs to 164 residues: Glutamate uptake regulatory protein (164 aa).

Positions 5–66 (LDDFDIKILD…LLDPQKIGLG (62 aa)) constitute an HTH asnC-type domain. The segment at residues 24-43 (MAELSEKTGLSANACWRRIR) is a DNA-binding region (H-T-H motif).

In terms of biological role, represses the secondary, H(+)-coupled glutamate uptake system (Gluemp) genes. The chain is Glutamate uptake regulatory protein (grp) from Zymomonas mobilis subsp. mobilis (strain ATCC 31821 / ZM4 / CP4).